Reading from the N-terminus, the 822-residue chain is MTVLSQIIKPDDMIKITSEFARLGDRCYLDNAGATLYPKSLITSINEDLLKNVYMNPHTDKNTKDYIEQIRCLILKHFNTDPSTYTLIFTSGTTQALKLVIESFQFMKNEDDDLNCGSFVYLEDNHTSVVGLRELAVDKDAEVVHIAHEDFLNVINTKAKQTSKYTNGGNCLVAYPAQSNFNGFKYPLNCIENIKNGCLNNHLKKHLCEINSDWYVLLDAAAYVATSKLDLAKVQPDFVSLSFYKIFGFPTGLGALLVKKSSENVLSQKRYFGGGTVDALLSNEHYHIKREIFHERFEDGSLSFLSIISLKQCLDTMYRIIPRIIHDDIMETISYHTFYLAKDLYCQLLDLRHRNGTKAIKFYLDSDFSDITKQGGVLTFNLVREDGTYIGFSEFQHMADLFNISVRTGCFCNSGSCQRHLHMSNKDMKDMYNAGHRCGDEVDLINEKPTGAIRISFGYYNTFEDVDKFVNMICRCFVNAKARKQKRIINHFVETPKIKHYNGNVNKIINEQIYFKNVDDVLINIPPMSTKIILKEICIFPIKSCGAFKILSGWNIGPKGFEYDREWMIVKDNGVCLTQKQNTRMCMIRPQIDLKQKVMILNFPGKTPISIPLENSINEVQKNGSLCHSKVCTDMIKGIDCGDEVADWISEALEVSFLRLIRQSSNDNRSLKKKKDEDKKLLSLSNQAQYLLINKATVKWLSEKIKDPLFTDDLNHLTDRFRGNLIIEMEQELLEREWHSVIIGNHEFKVEGQCPRCQMVCIDQQTGEKTVEPLRTIAEQFGGKLRFGIYLSYVGTVNKSDDRTLKTYSPIKAILNDDNISR.

N6-(pyridoxal phosphate)lysine is present on K245. C412 is a catalytic residue. An MOSC domain is found at 658–814 (LRLIRQSSND…LKTYSPIKAI (157 aa)).

Belongs to the class-V pyridoxal-phosphate-dependent aminotransferase family. MOCOS subfamily. Pyridoxal 5'-phosphate serves as cofactor.

The enzyme catalyses Mo-molybdopterin + L-cysteine + AH2 = thio-Mo-molybdopterin + L-alanine + A + H2O. It functions in the pathway cofactor biosynthesis; molybdopterin biosynthesis. In terms of biological role, sulfurates the molybdenum cofactor. Sulfation of molybdenum is essential for xanthine dehydrogenase (XDH) and aldehyde oxidase (ADO) enzymes in which molybdenum cofactor is liganded by 1 oxygen and 1 sulfur atom in active form. This chain is Molybdenum cofactor sulfurase, found in Bombyx mori (Silk moth).